Consider the following 132-residue polypeptide: MISITEWQKIGVGITGFGIFFILFGTLLYFDSVLLAFGNLLFLTGLSLIIGLRKTFWFFFQRHKLKGTSFLLGGVVIVLLRWPLLGMFLETYGFFSLFKGFFPVAFGFLGNVCNIPFLGALFRRLQGTSSMV.

Residues 1–9 are Cytoplasmic-facing; sequence MISITEWQK. A helical membrane pass occupies residues 10-30; it reads IGVGITGFGIFFILFGTLLYF. A topological domain (lumenal) is located at residue aspartate 31. The chain crosses the membrane as a helical span at residues 32 to 52; that stretch reads SVLLAFGNLLFLTGLSLIIGL. Topologically, residues 53 to 68 are cytoplasmic; sequence RKTFWFFFQRHKLKGT. A helical transmembrane segment spans residues 69–89; sequence SFLLGGVVIVLLRWPLLGMFL. At 90-100 the chain is on the lumenal side; it reads ETYGFFSLFKG. Residues 101 to 121 traverse the membrane as a helical segment; it reads FFPVAFGFLGNVCNIPFLGAL. Topologically, residues 122–132 are cytoplasmic; the sequence is FRRLQGTSSMV.

The protein belongs to the GOT1 family.

It is found in the golgi apparatus membrane. May be involved in fusion of ER-derived transport vesicles with the Golgi complex. This is Vesicle transport protein GOT1A from Homo sapiens (Human).